A 540-amino-acid polypeptide reads, in one-letter code: MSFKFNSGTFEDNTFNEQIRDRLTRALNPSRFENPESTSGQDGSDSQKKPKKLDILKSGVTVRQVDFRTIPQLEILDLDVSAQSKSLLKGICKISCKDAMIQITTEIEANLLLLYEAVSPEFTTPKLISNDSFTVPITMTFDHIELEAITNIFVKNTGVGISFNDVNLDFRFECSMKLLQTSIEKRLKNSMETIFKDVLPSVIFNMSQRWFTHGPELVEDPSLIATDSALSEVTPMTILDDSDLQDLSPATMLRLSTLISSRQSLALNPISSHTVATIPGCIERQNLRRFSSRIPSLNNYYAQEVGKHRPSKILPTRENSNSIIANKMASDFIQNSLPTEVLESGSYNIREIANIQQRIYERNNEENVIRRRRIRLGKRSKSVQDTAAKMHPVPESGSLHPIIQPSTTPAATVTPLLSPQPVVAKSPPESMTPNTLPEQSPYTSNIAIDKIPDLTLPQAQLQKDKVPMRLNLLEESYFKSDLKDLRNSLYSPMRNQRFYVQSEDGARPSLLDGKRFSFVGLANQQMKWGNDDLPPPYKAN.

Residues 1–208 (MSFKFNSGTF…LPSVIFNMSQ (208 aa)) enclose the SMP-LTD domain. Disordered regions lie at residues 26–51 (ALNP…KKPK) and 379–399 (RSKS…SGSL). Over residues 35–44 (PESTSGQDGS) the composition is skewed to polar residues.

This sequence belongs to the MDM34 family. Component of the ER-mitochondria encounter structure (ERMES) or MDM complex, composed of MMM1, MDM10, MDM12 and MDM34.

It localises to the mitochondrion outer membrane. Component of the ERMES/MDM complex, which serves as a molecular tether to connect the endoplasmic reticulum (ER) and mitochondria. Components of this complex are involved in the control of mitochondrial shape and protein biogenesis, and function in nonvesicular lipid trafficking between the ER and mitochondria. MDM34 is required for the interaction of the ER-resident membrane protein MMM1 and the outer mitochondrial membrane-resident beta-barrel protein MDM10. This Kluyveromyces lactis (strain ATCC 8585 / CBS 2359 / DSM 70799 / NBRC 1267 / NRRL Y-1140 / WM37) (Yeast) protein is Mitochondrial distribution and morphology protein 34.